We begin with the raw amino-acid sequence, 371 residues long: Cytochrome b (371 aa).

4 helical membrane passes run 25-45 (FGSMLLTCSALQVMTGFFLSM), 69-90 (WMMQNLHAIGASMFFICIYMHI), 105-125 (WLSGTTLLIMLMATAFFGYVL), and 170-190 (FFALHFILPFGIISMSSVHIM). 2 residues coordinate heme b: histidine 75 and histidine 89. Residues histidine 174 and histidine 188 each contribute to the heme b site. Histidine 193 serves as a coordination point for a ubiquinone. The next 4 helical transmembrane spans lie at 218 to 238 (YKDLLVISMMIITVLLTVSFF), 280 to 300 (LGGALALVMSIMILLTMPFTH), 312 to 332 (LMQFMFWTLVATFTVITWTAT), and 339 to 358 (FTTISQVASIIYFMFFMSNP).

It belongs to the cytochrome b family. In terms of assembly, the cytochrome bc1 complex contains 3 respiratory subunits (MT-CYB, CYC1 and UQCRFS1), 2 core proteins (UQCRC1 and UQCRC2) and probably 6 low-molecular weight proteins. Requires heme b as cofactor.

The protein resides in the mitochondrion inner membrane. Its function is as follows. Component of the ubiquinol-cytochrome c reductase complex (complex III or cytochrome b-c1 complex) that is part of the mitochondrial respiratory chain. The b-c1 complex mediates electron transfer from ubiquinol to cytochrome c. Contributes to the generation of a proton gradient across the mitochondrial membrane that is then used for ATP synthesis. The chain is Cytochrome b (MT-CYB) from Candoia carinata (Papuan tree boa).